Consider the following 149-residue polypeptide: Ribonuclease H (149 aa).

In terms of domain architecture, RNase H type-1 spans Met-1–Asp-142. Residues Asp-10, Glu-48, Asp-70, and Asp-134 each contribute to the Mg(2+) site.

The protein belongs to the RNase H family. Monomer. Mg(2+) is required as a cofactor.

Its subcellular location is the cytoplasm. The catalysed reaction is Endonucleolytic cleavage to 5'-phosphomonoester.. In terms of biological role, endonuclease that specifically degrades the RNA of RNA-DNA hybrids. In Pseudomonas savastanoi pv. phaseolicola (strain 1448A / Race 6) (Pseudomonas syringae pv. phaseolicola (strain 1448A / Race 6)), this protein is Ribonuclease H.